We begin with the raw amino-acid sequence, 933 residues long: Protein inturned (933 aa).

The tract at residues 1-54 is disordered; sequence MASLPLCGSVRSPEGLPGDPSSQEDRQDYDPEDPVSGSGSYSPTSTDSNDLEPE. The span at 37 to 48 shows a compositional bias: polar residues; sequence GSGSYSPTSTDS. The PDZ domain maps to 186–264; that stretch reads LVGIIHQTKW…PMQVKLTFEN (79 aa). The residue at position 675 (Ser675) is a Phosphoserine. The segment at 703 to 742 is disordered; it reads LKTRKPSPSRSGGPDSGLEGEGVGLSPHTTESQGSHGSEE. Low complexity predominate over residues 710 to 719; the sequence is PSRSGGPDSG. The span at 729–738 shows a compositional bias: polar residues; the sequence is PHTTESQGSH.

It belongs to the inturned family. As to quaternary structure, component of the CPLANE (ciliogenesis and planar polarity effectors) complex, composed of INTU, FUZ and WDPCP. Interacts with CPLANE1. Interacts with NPHP4 and DAAM1; INTU is mediating the interaction between NPHP4 and DAAM1.

Its subcellular location is the cytoplasm. The protein localises to the cell surface. It is found in the cytoskeleton. It localises to the cilium basal body. The protein resides in the microtubule organizing center. Its subcellular location is the centrosome. The protein localises to the centriole. Functionally, plays a key role in ciliogenesis and embryonic development. Regulator of cilia formation by controlling the organization of the apical actin cytoskeleton and the positioning of the basal bodies at the apical cell surface, which in turn is essential for the normal orientation of elongating ciliary microtubules. Plays a key role in definition of cell polarity via its role in ciliogenesis but not via conversion extension. Has an indirect effect on hedgehog signaling. Proposed to function as core component of the CPLANE (ciliogenesis and planar polarity effectors) complex involved in the recruitment of peripheral IFT-A proteins to basal bodies. Required for recruitment of CPLANE2 to the mother centriole. Binds phosphatidylinositol 3-phosphate with highest affinity, followed by phosphatidylinositol 4-phosphate and phosphatidylinositol 5-phosphate. This Bos taurus (Bovine) protein is Protein inturned (INTU).